A 232-amino-acid polypeptide reads, in one-letter code: MAKIAKRVQKSREGIDPAKVYGLTEAVTLVKERATAKFDETIEVAMNLGVDPRHADQMVRGVVNLPNGTGRSVRVAVFARGAKADEAKAAGADVVGAEDLVEIVQGGKIDFDRCIATPDMMPLVGRLGKVLGPRGMMPNPKVGTVTMDVTAAVKSSKGGAVEFRVEKAGIVHAGVGKASFDAKALEENIRAFADAVIKAKPTGAKGNYVKRVAISSTMGPGLKIDPATLSVA.

The protein belongs to the universal ribosomal protein uL1 family. As to quaternary structure, part of the 50S ribosomal subunit.

Its function is as follows. Binds directly to 23S rRNA. The L1 stalk is quite mobile in the ribosome, and is involved in E site tRNA release. Protein L1 is also a translational repressor protein, it controls the translation of the L11 operon by binding to its mRNA. In Sinorhizobium fredii (strain NBRC 101917 / NGR234), this protein is Large ribosomal subunit protein uL1.